The following is a 165-amino-acid chain: Small ribosomal subunit protein uS5 (165 aa).

Positions L10 to V73 constitute an S5 DRBM domain.

It belongs to the universal ribosomal protein uS5 family. Part of the 30S ribosomal subunit. Contacts proteins S4 and S8.

Functionally, with S4 and S12 plays an important role in translational accuracy. Its function is as follows. Located at the back of the 30S subunit body where it stabilizes the conformation of the head with respect to the body. This is Small ribosomal subunit protein uS5 from Clostridium acetobutylicum (strain ATCC 824 / DSM 792 / JCM 1419 / IAM 19013 / LMG 5710 / NBRC 13948 / NRRL B-527 / VKM B-1787 / 2291 / W).